The sequence spans 127 residues: Ribosome-binding factor A (127 aa).

This sequence belongs to the RbfA family. Monomer. Binds 30S ribosomal subunits, but not 50S ribosomal subunits or 70S ribosomes.

It is found in the cytoplasm. In terms of biological role, one of several proteins that assist in the late maturation steps of the functional core of the 30S ribosomal subunit. Associates with free 30S ribosomal subunits (but not with 30S subunits that are part of 70S ribosomes or polysomes). Required for efficient processing of 16S rRNA. May interact with the 5'-terminal helix region of 16S rRNA. This Chloroflexus aurantiacus (strain ATCC 29366 / DSM 635 / J-10-fl) protein is Ribosome-binding factor A.